The sequence spans 476 residues: Aspartyl/glutamyl-tRNA(Asn/Gln) amidotransferase subunit B (476 aa).

The protein belongs to the GatB/GatE family. GatB subfamily. As to quaternary structure, heterotrimer of A, B and C subunits.

The catalysed reaction is L-glutamyl-tRNA(Gln) + L-glutamine + ATP + H2O = L-glutaminyl-tRNA(Gln) + L-glutamate + ADP + phosphate + H(+). The enzyme catalyses L-aspartyl-tRNA(Asn) + L-glutamine + ATP + H2O = L-asparaginyl-tRNA(Asn) + L-glutamate + ADP + phosphate + 2 H(+). Its function is as follows. Allows the formation of correctly charged Asn-tRNA(Asn) or Gln-tRNA(Gln) through the transamidation of misacylated Asp-tRNA(Asn) or Glu-tRNA(Gln) in organisms which lack either or both of asparaginyl-tRNA or glutaminyl-tRNA synthetases. The reaction takes place in the presence of glutamine and ATP through an activated phospho-Asp-tRNA(Asn) or phospho-Glu-tRNA(Gln). This Laribacter hongkongensis (strain HLHK9) protein is Aspartyl/glutamyl-tRNA(Asn/Gln) amidotransferase subunit B.